The following is a 276-amino-acid chain: Large ribosomal subunit protein uL2 (276 aa).

Positions Val224 to Lys276 are disordered. Basic residues predominate over residues Lys258–Lys276.

This sequence belongs to the universal ribosomal protein uL2 family. Part of the 50S ribosomal subunit. Forms a bridge to the 30S subunit in the 70S ribosome.

In terms of biological role, one of the primary rRNA binding proteins. Required for association of the 30S and 50S subunits to form the 70S ribosome, for tRNA binding and peptide bond formation. It has been suggested to have peptidyltransferase activity; this is somewhat controversial. Makes several contacts with the 16S rRNA in the 70S ribosome. The polypeptide is Large ribosomal subunit protein uL2 (Geobacillus sp. (strain WCH70)).